A 99-amino-acid polypeptide reads, in one-letter code: Acylphosphatase (99 aa).

An Acylphosphatase-like domain is found at 10 to 99; that stretch reads RLTAFVHGHV…PRGVEGFTER (90 aa). Active-site residues include arginine 25 and asparagine 43.

The protein belongs to the acylphosphatase family.

The enzyme catalyses an acyl phosphate + H2O = a carboxylate + phosphate + H(+). This Corynebacterium efficiens (strain DSM 44549 / YS-314 / AJ 12310 / JCM 11189 / NBRC 100395) protein is Acylphosphatase (acyP).